A 237-amino-acid chain; its full sequence is Chaplin-B (237 aa).

The N-terminal stretch at M1–A26 is a signal peptide. Residues S42–D82 enclose the Chaplin 1 domain. Disordered stretches follow at residues A81–N127 and G148–G216. The segment covering G101–G115 has biased composition (low complexity). Positions S120–N160 constitute a Chaplin 2 domain. The segment covering V169–S178 has biased composition (pro residues). The LPXTG sorting signal motif lies at L202–G206. The residue at position 205 (T205) is a Pentaglycyl murein peptidoglycan amidated threonine. Residues G206–D237 constitute a propeptide, removed by sortase.

This sequence belongs to the chaplin family. Long chaplin subfamily.

The protein localises to the secreted. Its subcellular location is the cell wall. One of 8 partially redundant surface-active proteins required for efficient formation of aerial mycelium; the short chaplins assemble into a hydrophobic, amyloidal fibrillar surface layer that envelopes and protects aerial hyphae and spores, presumably anchored to the long chaplins. Chaplins have an overlapping function with the surface-active SapB peptide; chaplins are essential on minimal medium while on rich medium both chaplins and SapB are required for efficient aerial hyphae formation. The long chaplins (ChpA, ChpB, ChpC) are not absolutely necessary for short chaplin localization or rodlet formation, but probably play a role in initiating aerial hyphae development. Chaplins are also involved in cell attachment to a hydrophobic surface. This Streptomyces coelicolor (strain ATCC BAA-471 / A3(2) / M145) protein is Chaplin-B.